We begin with the raw amino-acid sequence, 199 residues long: Dephospho-CoA kinase (199 aa).

The 197-residue stretch at 3–199 folds into the DPCK domain; the sequence is ILGLTGSIGM…EVVKMPQRRA (197 aa). 11 to 16 contacts ATP; that stretch reads GMGKST.

The protein belongs to the CoaE family.

The protein localises to the cytoplasm. It catalyses the reaction 3'-dephospho-CoA + ATP = ADP + CoA + H(+). It participates in cofactor biosynthesis; coenzyme A biosynthesis; CoA from (R)-pantothenate: step 5/5. In terms of biological role, catalyzes the phosphorylation of the 3'-hydroxyl group of dephosphocoenzyme A to form coenzyme A. This Bradyrhizobium diazoefficiens (strain JCM 10833 / BCRC 13528 / IAM 13628 / NBRC 14792 / USDA 110) protein is Dephospho-CoA kinase.